The following is a 932-amino-acid chain: LPS-assembly protein LptD (932 aa).

The N-terminal stretch at 1-33 (MALKSPAFRRKFPLLVTGGLLALQPLATSYAVA) is a signal peptide. The disordered stretch occupies residues 54–87 (PVNNLPPRPVHEGAAVSSGTEAASEGETADRPML).

Belongs to the LptD family. In terms of assembly, component of the lipopolysaccharide transport and assembly complex. Interacts with LptE and LptA.

The protein resides in the cell outer membrane. Its function is as follows. Together with LptE, is involved in the assembly of lipopolysaccharide (LPS) at the surface of the outer membrane. The sequence is that of LPS-assembly protein LptD from Pseudomonas putida (strain GB-1).